The following is a 503-amino-acid chain: Zinc finger and BTB domain-containing protein 37 (503 aa).

A BTB domain is found at 32–96 (CDIVVNVQGQ…CYTGRICLQL (65 aa)). Disordered stretches follow at residues 140 to 206 (QTRT…SDVE) and 280 to 344 (GHGS…QVEE). Over residues 144 to 154 (KHQERPPESHR) the composition is skewed to basic and acidic residues. Residues 155–167 (VTPNLNRSLSPRH) show a composition bias toward polar residues. Residues 319–336 (TERHRARSESPGRMDEPK) are compositionally biased toward basic and acidic residues. C2H2-type zinc fingers lie at residues 373–395 (LTCIYCAKSFNQKGSLDRHMRLH), 401–423 (FVCRMCGKKYTRKDQLEYHIRKH), and 429–452 (FHCHVCGKSFPFQAILNQHFRKNH). Positions 457-503 (PLEGPHSISPETTVTSRGQAEEESPSQEETVAPGEAVQGSVSTTGPD) are disordered. Positions 465 to 474 (SPETTVTSRG) are enriched in polar residues.

The protein localises to the nucleus. Functionally, may be involved in transcriptional regulation. This is Zinc finger and BTB domain-containing protein 37 (ZBTB37) from Homo sapiens (Human).